The following is a 310-amino-acid chain: tRNA uridine(34) hydroxylase (310 aa).

One can recognise a Rhodanese domain in the interval 127–225 (KNQNTIVIDT…YLDEISKEEN (99 aa)). The active-site Cysteine persulfide intermediate is the Cys185.

Belongs to the TrhO family.

It carries out the reaction uridine(34) in tRNA + AH2 + O2 = 5-hydroxyuridine(34) in tRNA + A + H2O. Its function is as follows. Catalyzes oxygen-dependent 5-hydroxyuridine (ho5U) modification at position 34 in tRNAs. This is tRNA uridine(34) hydroxylase from Prochlorococcus marinus (strain MIT 9215).